Consider the following 777-residue polypeptide: C6 finger domain transcription factor adaR (777 aa).

Residues 1–20 (MEQRSSPARSLPPRKTTTTP) form a disordered region. A DNA-binding region (zn(2)-C6 fungal-type) is located at residues 24 to 50 (CELCRKRKVKCDKLTPCTNCAASGTVC). Disordered stretches follow at residues 61 to 85 (GRHATRPRRVSSPPPTSAPGETDRI), 111 to 144 (NSHSHTRTPSATSREQSVQLSDTSTFQTAPNPNT), 182 to 213 (SSLAGGQEGPIPSSDSAKSEPPNDDGIQVLGL), 419 to 440 (PQHINDSDFDPTTAAHSDPNRE), 468 to 496 (RKVDGGIPTPTSSTSGTSTSRSRTCDPSW), and 655 to 699 (LPPS…PTGS). Over residues 475-489 (PTPTSSTSGTSTSRS) the composition is skewed to low complexity. Residues 668 to 677 (ATPPTFPGVP) show a composition bias toward pro residues.

It localises to the nucleus. Its function is as follows. Transcription factor that specifically regulates the expression of the ada gene cluster involved in the biosynthesis of the linear tetracyclic TAN-1612 neuropeptide Y receptor antagonist. The protein is C6 finger domain transcription factor adaR of Aspergillus niger (strain ATCC MYA-4892 / CBS 513.88 / FGSC A1513).